Here is a 180-residue protein sequence, read N- to C-terminus: Nucleoside triphosphate/diphosphate phosphatase (180 aa).

Arginine 26 serves as the catalytic Proton donor. Positions 90, 106, 108, 110, 123, and 126 each coordinate Mg(2+).

It belongs to the Ntdp family. The cofactor is Mg(2+).

The enzyme catalyses a ribonucleoside 5'-triphosphate + H2O = a ribonucleoside 5'-diphosphate + phosphate + H(+). It carries out the reaction a ribonucleoside 5'-diphosphate + H2O = a ribonucleoside 5'-phosphate + phosphate + H(+). Functionally, has nucleoside phosphatase activity towards nucleoside triphosphates and nucleoside diphosphates. The chain is Nucleoside triphosphate/diphosphate phosphatase from Staphylococcus saprophyticus subsp. saprophyticus (strain ATCC 15305 / DSM 20229 / NCIMB 8711 / NCTC 7292 / S-41).